We begin with the raw amino-acid sequence, 190 residues long: Thiamine biosynthesis protein X (190 aa).

The signal sequence occupies residues 1–22; that stretch reads MSISRTVFGIAATAALSAALVA. The N-palmitoyl cysteine moiety is linked to residue C23. C23 is lipidated: S-diacylglycerol cysteine. The segment at 43–68 is disordered; sequence SQNPTSASSTSTSSATTTSSAPVEED. Residues 47–63 are compositionally biased toward low complexity; sequence TSASSTSTSSATTTSSA.

Its subcellular location is the cell membrane. Functionally, is necessary for biosynthesis of the 4-methyl-5-(beta-hydroxyethyl)thiazol component from which thiamine is formed. The chain is Thiamine biosynthesis protein X (thiX) from Corynebacterium glutamicum (strain ATCC 13032 / DSM 20300 / JCM 1318 / BCRC 11384 / CCUG 27702 / LMG 3730 / NBRC 12168 / NCIMB 10025 / NRRL B-2784 / 534).